The chain runs to 457 residues: Ribosome biogenesis protein YTM1 (457 aa).

Residues 8–89 (VKVKFFTREK…ETTLTVEYTR (82 aa)) are ubiquitin-like (UBL) domain. The sufficient for interaction with ERB1 and association with 66S pre-ribosomes stretch occupies residues 99-457 (NFNNDDWVSA…INKGDNIFKN (359 aa)). WD repeat units lie at residues 101–140 (NNDDWVSALDVSDDFRHIYSGSYDGVVRTWNMSGKVEKQY), 142–180 (GHTGAVKAVKYISNTRIVSAGNDRSLRLWKTKNDDGSVS), 203–241 (GHKAPVVSLDVASNSRILSASYDNTVALWSTIYKEMTAI), 282–322 (SHTG…CIDT), 324–363 (TTSYPLLSIAQMPTLNLLACGSSVRHITLHDPRVSSSAKI), 370–410 (GHKN…PMYT), and 421–457 (GVNDKVFAVKWAKSIGIISGGQDKKIQINKGDNIFKN). Residues 172–191 (TKNDDGSVSNNTGDENDEEN) form a disordered region.

Belongs to the WD repeat WDR12/YTM1 family. In terms of assembly, component of the NOP7 complex, composed of ERB1, NOP7 and YTM1. The complex is held together by ERB1, which interacts with NOP7 via its N-terminal domain and with YTM1 via a high-affinity interaction between the seven-bladed beta-propeller domains of the 2 proteins. The NOP7 complex associates with the 66S pre-ribosome. Interacts (via UBL domain) with MDN1 (via VWFA/MIDAS domain).

It is found in the nucleus. It localises to the nucleolus. The protein localises to the nucleoplasm. Component of the NOP7 complex, which is required for maturation of the 25S and 5.8S ribosomal RNAs and formation of the 60S ribosome. This Candida glabrata (strain ATCC 2001 / BCRC 20586 / JCM 3761 / NBRC 0622 / NRRL Y-65 / CBS 138) (Yeast) protein is Ribosome biogenesis protein YTM1.